A 448-amino-acid polypeptide reads, in one-letter code: Trigger factor (448 aa).

Residues 172–257 (GDRVTVDFVG…MKKIEWPHMP (86 aa)) form the PPIase FKBP-type domain.

This sequence belongs to the FKBP-type PPIase family. Tig subfamily.

The protein resides in the cytoplasm. It carries out the reaction [protein]-peptidylproline (omega=180) = [protein]-peptidylproline (omega=0). Involved in protein export. Acts as a chaperone by maintaining the newly synthesized protein in an open conformation. Functions as a peptidyl-prolyl cis-trans isomerase. The sequence is that of Trigger factor from Burkholderia vietnamiensis (strain G4 / LMG 22486) (Burkholderia cepacia (strain R1808)).